The sequence spans 530 residues: Na(+)/H(+) antiporter NhaB (530 aa).

12 helical membrane-spanning segments follow: residues 13–33, 98–118, 123–145, 149–166, 205–225, 238–258, 308–328, 330–350, 356–376, 393–413, 451–471, and 480–500; these read FLGKAPDWYKLAIISFLIINP, LLLVFMVAGIYFMKELLLFIF, LGIQSKILLSVAFCVAAAFLSAF, LTVIAVVISVAVGFYSIY, LLMHAGVGTALGGVMTMVGEP, FGEFIIRMLPVTLPVFFCGIL, IAVWLIVGLALHVAEVGLIGL, VIILATAFTGVIEEHSMGKAF, FTALLAVFFAVVAVIIDQALF, LALFYVANGILSMVSDNVFVG, ATPNGQAAFLFLLTSALAPLI, and IMALPYTIVLALVGLAGIVFF.

Belongs to the NhaB Na(+)/H(+) (TC 2.A.34) antiporter family.

The protein resides in the cell inner membrane. The enzyme catalyses 2 Na(+)(in) + 3 H(+)(out) = 2 Na(+)(out) + 3 H(+)(in). Its function is as follows. Na(+)/H(+) antiporter that extrudes sodium in exchange for external protons. This Vibrio atlanticus (strain LGP32) (Vibrio splendidus (strain Mel32)) protein is Na(+)/H(+) antiporter NhaB.